The following is a 1399-amino-acid chain: DNA-directed RNA polymerase subunit beta' (1399 aa).

Zn(2+) contacts are provided by Cys-70, Cys-72, Cys-85, and Cys-88. Residues Asp-460, Asp-462, and Asp-464 each coordinate Mg(2+). Residues Cys-814, Cys-888, Cys-895, and Cys-898 each coordinate Zn(2+).

Belongs to the RNA polymerase beta' chain family. As to quaternary structure, the RNAP catalytic core consists of 2 alpha, 1 beta, 1 beta' and 1 omega subunit. When a sigma factor is associated with the core the holoenzyme is formed, which can initiate transcription. Requires Mg(2+) as cofactor. Zn(2+) is required as a cofactor.

The catalysed reaction is RNA(n) + a ribonucleoside 5'-triphosphate = RNA(n+1) + diphosphate. DNA-dependent RNA polymerase catalyzes the transcription of DNA into RNA using the four ribonucleoside triphosphates as substrates. The chain is DNA-directed RNA polymerase subunit beta' from Pseudomonas putida (strain W619).